We begin with the raw amino-acid sequence, 455 residues long: Phosphoglucosamine mutase (455 aa).

The active-site Phosphoserine intermediate is the S102. Mg(2+)-binding residues include S102, D241, D243, and D245. The residue at position 102 (S102) is a Phosphoserine.

This sequence belongs to the phosphohexose mutase family. It depends on Mg(2+) as a cofactor. Activated by phosphorylation.

The enzyme catalyses alpha-D-glucosamine 1-phosphate = D-glucosamine 6-phosphate. Its function is as follows. Catalyzes the conversion of glucosamine-6-phosphate to glucosamine-1-phosphate. The protein is Phosphoglucosamine mutase of Legionella pneumophila (strain Paris).